A 552-amino-acid polypeptide reads, in one-letter code: Protein FAM234A (552 aa).

The span at 1 to 22 (MLDHKDLEAEIHPLKNEERKSQ) shows a compositional bias: basic and acidic residues. The segment at 1–40 (MLDHKDLEAEIHPLKNEERKSQENLGNPSKNEDNVKSAPP) is disordered. Over 1-49 (MLDHKDLEAEIHPLKNEERKSQENLGNPSKNEDNVKSAPPQSRLSRCRA) the chain is Cytoplasmic. S21 carries the post-translational modification Phosphoserine. The chain crosses the membrane as a helical; Signal-anchor for type II membrane protein span at residues 50-70 (AAFFLSLFLCLFVVFVVSFVI). At 71-552 (PCPDRPASQR…FSRLRYQSEA (482 aa)) the chain is on the extracellular side. N-linked (GlcNAc...) asparagine glycans are attached at residues N116, N314, N389, and N473.

It belongs to the FAM234 family.

The protein localises to the membrane. This is Protein FAM234A from Homo sapiens (Human).